The following is a 123-amino-acid chain: Unclassified hydrophobin 9 (123 aa).

An N-terminal signal peptide occupies residues 1–24; sequence MFFFNTKPIVFLVVLSVVATFAAA. Disulfide bonds link cysteine 37–cysteine 103, cysteine 45–cysteine 97, cysteine 46–cysteine 88, and cysteine 104–cysteine 117.

It belongs to the fungal hydrophobin family. As to quaternary structure, self-assembles to form functional amyloid fibrils called rodlets. Self-assembly into fibrillar rodlets occurs spontaneously at hydrophobic:hydrophilic interfaces and the rodlets further associate laterally to form amphipathic monolayers.

It localises to the secreted. The protein localises to the cell wall. Its function is as follows. Aerial growth, conidiation, and dispersal of filamentous fungi in the environment rely upon a capability of their secreting small amphipathic proteins called hydrophobins (HPBs) with low sequence identity. Class I can self-assemble into an outermost layer of rodlet bundles on aerial cell surfaces, conferring cellular hydrophobicity that supports fungal growth, development and dispersal; whereas Class II form highly ordered films at water-air interfaces through intermolecular interactions but contribute nothing to the rodlet structure. The chain is Unclassified hydrophobin 9 from Pleurotus ostreatus (strain PC15) (Oyster mushroom).